A 429-amino-acid polypeptide reads, in one-letter code: UDP-N-acetylglucosamine 1-carboxyvinyltransferase 2 (429 aa).

22–23 (KN) provides a ligand contact to phosphoenolpyruvate. R93 lines the UDP-N-acetyl-alpha-D-glucosamine pocket. C117 (proton donor) is an active-site residue. C117 is subject to 2-(S-cysteinyl)pyruvic acid O-phosphothioketal. Residues 122–126 (RPIDQ), D305, and I327 contribute to the UDP-N-acetyl-alpha-D-glucosamine site.

Belongs to the EPSP synthase family. MurA subfamily.

It localises to the cytoplasm. The catalysed reaction is phosphoenolpyruvate + UDP-N-acetyl-alpha-D-glucosamine = UDP-N-acetyl-3-O-(1-carboxyvinyl)-alpha-D-glucosamine + phosphate. It functions in the pathway cell wall biogenesis; peptidoglycan biosynthesis. Functionally, cell wall formation. Adds enolpyruvyl to UDP-N-acetylglucosamine. The polypeptide is UDP-N-acetylglucosamine 1-carboxyvinyltransferase 2 (Bacillus anthracis).